The chain runs to 199 residues: Holliday junction branch migration complex subunit RuvA (199 aa).

The interval 1–64 (MIALLTGKLA…EDAINLYGFR (64 aa)) is domain I. Residues 65-143 (TQQEKELFQL…KLGLAQPQAG (79 aa)) are domain II. The tract at residues 144–148 (GATAP) is flexible linker. The segment at 149-199 (AKQEIRDDVLSALINLGYKEAVVQKALAELKVTEDATVELVLKQALKILMK) is domain III.

It belongs to the RuvA family. Homotetramer. Forms an RuvA(8)-RuvB(12)-Holliday junction (HJ) complex. HJ DNA is sandwiched between 2 RuvA tetramers; dsDNA enters through RuvA and exits via RuvB. An RuvB hexamer assembles on each DNA strand where it exits the tetramer. Each RuvB hexamer is contacted by two RuvA subunits (via domain III) on 2 adjacent RuvB subunits; this complex drives branch migration. In the full resolvosome a probable DNA-RuvA(4)-RuvB(12)-RuvC(2) complex forms which resolves the HJ.

It localises to the cytoplasm. Its function is as follows. The RuvA-RuvB-RuvC complex processes Holliday junction (HJ) DNA during genetic recombination and DNA repair, while the RuvA-RuvB complex plays an important role in the rescue of blocked DNA replication forks via replication fork reversal (RFR). RuvA specifically binds to HJ cruciform DNA, conferring on it an open structure. The RuvB hexamer acts as an ATP-dependent pump, pulling dsDNA into and through the RuvAB complex. HJ branch migration allows RuvC to scan DNA until it finds its consensus sequence, where it cleaves and resolves the cruciform DNA. In Geobacter sp. (strain M21), this protein is Holliday junction branch migration complex subunit RuvA.